The following is a 379-amino-acid chain: Deoxyhypusine synthase (379 aa).

Residues 104 to 108 (SNLVS), 130 to 132 (TAG), glutamate 136, and aspartate 237 contribute to the NAD(+) site. 135-136 (EE) is a spermidine binding site. Spermidine is bound at residue aspartate 242. Glycine 293 contacts NAD(+). Position 298 (histidine 298) interacts with spermidine. 318-319 (TA) contacts NAD(+). Spermidine contacts are provided by residues 324–326 (GSD) and 333–339 (EAVSWGK). Residue lysine 339 is the Nucleophile of the active site. Residue 352–353 (DA) coordinates NAD(+).

Belongs to the deoxyhypusine synthase family. Homotetramer. NAD(+) serves as cofactor.

The catalysed reaction is [eIF5A protein]-L-lysine + spermidine = [eIF5A protein]-deoxyhypusine + propane-1,3-diamine. Its pathway is protein modification; eIF5A hypusination. Functionally, catalyzes the NAD-dependent oxidative cleavage of spermidine and the subsequent transfer of the butylamine moiety of spermidine to the epsilon-amino group of a specific lysine residue of the eIF-5A precursor protein to form the intermediate deoxyhypusine residue. Also able to produce homospermidine from putrescine. In Nicotiana tabacum (Common tobacco), this protein is Deoxyhypusine synthase (DHS1).